Consider the following 296-residue polypeptide: tRNA dimethylallyltransferase (296 aa).

2–9 (GPTASGKT) contributes to the ATP binding site. 4–9 (TASGKT) lines the substrate pocket. Interaction with substrate tRNA regions lie at residues 27–30 (DSAL), 151–155 (QRLSR), and 232–237 (RCVGYR).

Belongs to the IPP transferase family. In terms of assembly, monomer. The cofactor is Mg(2+).

The enzyme catalyses adenosine(37) in tRNA + dimethylallyl diphosphate = N(6)-dimethylallyladenosine(37) in tRNA + diphosphate. Catalyzes the transfer of a dimethylallyl group onto the adenine at position 37 in tRNAs that read codons beginning with uridine, leading to the formation of N6-(dimethylallyl)adenosine (i(6)A). The polypeptide is tRNA dimethylallyltransferase (Shewanella woodyi (strain ATCC 51908 / MS32)).